A 428-amino-acid polypeptide reads, in one-letter code: Enolase (428 aa).

Glutamine 163 serves as a coordination point for (2R)-2-phosphoglycerate. Glutamate 205 functions as the Proton donor in the catalytic mechanism. Aspartate 242, glutamate 283, and aspartate 310 together coordinate Mg(2+). (2R)-2-phosphoglycerate contacts are provided by lysine 335, arginine 364, serine 365, and lysine 386. The active-site Proton acceptor is lysine 335.

This sequence belongs to the enolase family. The cofactor is Mg(2+).

It is found in the cytoplasm. It localises to the secreted. Its subcellular location is the cell surface. The enzyme catalyses (2R)-2-phosphoglycerate = phosphoenolpyruvate + H2O. Its pathway is carbohydrate degradation; glycolysis; pyruvate from D-glyceraldehyde 3-phosphate: step 4/5. Catalyzes the reversible conversion of 2-phosphoglycerate (2-PG) into phosphoenolpyruvate (PEP). It is essential for the degradation of carbohydrates via glycolysis. In Sulfurihydrogenibium sp. (strain YO3AOP1), this protein is Enolase.